We begin with the raw amino-acid sequence, 631 residues long: 1-deoxy-D-xylulose-5-phosphate synthase (631 aa).

Thiamine diphosphate-binding positions include histidine 74 and glycine 115 to serine 117. Residue aspartate 146 coordinates Mg(2+). Thiamine diphosphate is bound by residues glycine 147–alanine 148, asparagine 175, tyrosine 286, and glutamate 368. Asparagine 175 serves as a coordination point for Mg(2+).

This sequence belongs to the transketolase family. DXPS subfamily. Homodimer. It depends on Mg(2+) as a cofactor. The cofactor is thiamine diphosphate.

It catalyses the reaction D-glyceraldehyde 3-phosphate + pyruvate + H(+) = 1-deoxy-D-xylulose 5-phosphate + CO2. Its pathway is metabolic intermediate biosynthesis; 1-deoxy-D-xylulose 5-phosphate biosynthesis; 1-deoxy-D-xylulose 5-phosphate from D-glyceraldehyde 3-phosphate and pyruvate: step 1/1. In terms of biological role, catalyzes the acyloin condensation reaction between C atoms 2 and 3 of pyruvate and glyceraldehyde 3-phosphate to yield 1-deoxy-D-xylulose-5-phosphate (DXP). In Natranaerobius thermophilus (strain ATCC BAA-1301 / DSM 18059 / JW/NM-WN-LF), this protein is 1-deoxy-D-xylulose-5-phosphate synthase.